The chain runs to 240 residues: MTREEAIKKIIFAMDVKEFSDVQYWAELLSQHVGMFKVGKQLYTACGPAAVRMIQKCGGEVFLDLKYHDIPNTVAMATLEAANLGVQLCDLHAMGGYEMMNKTMETLDKNFSGCTARPKVLAITVLTSSNEETLRGIGIELPVPEMVVKLAKLAKSAGVDGVVASPQEVELIREACGKDFLVVTPGVRPSFASADDQKRIMSPAEAVKAGADYLVIGRPIAAAQSPVEAAQKIVDEIVAG.

Residues Asp-15, Lys-37, 64–73, Thr-127, Arg-188, Gln-197, Gly-217, and Arg-218 contribute to the substrate site; that span reads DLKYHDIPNT. The active-site Proton donor is the Lys-66.

This sequence belongs to the OMP decarboxylase family. Type 1 subfamily. As to quaternary structure, homodimer.

It carries out the reaction orotidine 5'-phosphate + H(+) = UMP + CO2. It functions in the pathway pyrimidine metabolism; UMP biosynthesis via de novo pathway; UMP from orotate: step 2/2. Catalyzes the decarboxylation of orotidine 5'-monophosphate (OMP) to uridine 5'-monophosphate (UMP). This chain is Orotidine 5'-phosphate decarboxylase, found in Citrifermentans bemidjiense (strain ATCC BAA-1014 / DSM 16622 / JCM 12645 / Bem) (Geobacter bemidjiensis).